The sequence spans 460 residues: ATP synthase subunit beta (460 aa).

150–157 (GGAGVGKT) is an ATP binding site.

It belongs to the ATPase alpha/beta chains family. F-type ATPases have 2 components, CF(1) - the catalytic core - and CF(0) - the membrane proton channel. CF(1) has five subunits: alpha(3), beta(3), gamma(1), delta(1), epsilon(1). CF(0) has three main subunits: a(1), b(2) and c(9-12). The alpha and beta chains form an alternating ring which encloses part of the gamma chain. CF(1) is attached to CF(0) by a central stalk formed by the gamma and epsilon chains, while a peripheral stalk is formed by the delta and b chains.

The protein localises to the cell inner membrane. The catalysed reaction is ATP + H2O + 4 H(+)(in) = ADP + phosphate + 5 H(+)(out). In terms of biological role, produces ATP from ADP in the presence of a proton gradient across the membrane. The catalytic sites are hosted primarily by the beta subunits. The sequence is that of ATP synthase subunit beta from Edwardsiella ictaluri (strain 93-146).